The primary structure comprises 252 residues: MKFNNLKISLELLFLYAQIKVKLTHLKHYSTRCSTLSLITVFPLDLLNYLSLIIIDVYYEICINYPNNFWLDSTSFDSRFLFILQNIEKKILRHNNYELLTKSINFKNYNLFLSSANLITHEDEKLFIWFFHILSEILIHKHKSSTISVKLLSIVGVHLIVKTLLIFLLLINNQSVVNSIFLSDSKIYHPQFINFNFWWQNLNQLVLRRIYSLYPIYVIKNNVLTTNYVFLPYFNSYLLQSNLTTWFSKLLK.

It localises to the plastid. Its subcellular location is the chloroplast. This is an uncharacterized protein from Guillardia theta (Cryptophyte).